We begin with the raw amino-acid sequence, 833 residues long: DNA ligase (833 aa).

Residues 35-39 (DVEYD), 84-85 (SL), and Glu-115 contribute to the NAD(+) site. The active-site N6-AMP-lysine intermediate is the Lys-117. NAD(+)-binding residues include Arg-138, Glu-175, Lys-292, and Lys-316. Residues Cys-410, Cys-413, Cys-428, and Cys-434 each contribute to the Zn(2+) site. One can recognise a BRCT domain in the interval 750–833 (VQAGPLDGQT…AFLSEHGQAV (84 aa)).

It belongs to the NAD-dependent DNA ligase family. LigA subfamily. The cofactor is Mg(2+). Mn(2+) serves as cofactor.

The catalysed reaction is NAD(+) + (deoxyribonucleotide)n-3'-hydroxyl + 5'-phospho-(deoxyribonucleotide)m = (deoxyribonucleotide)n+m + AMP + beta-nicotinamide D-nucleotide.. Its function is as follows. DNA ligase that catalyzes the formation of phosphodiester linkages between 5'-phosphoryl and 3'-hydroxyl groups in double-stranded DNA using NAD as a coenzyme and as the energy source for the reaction. It is essential for DNA replication and repair of damaged DNA. The chain is DNA ligase from Xanthomonas campestris pv. campestris (strain 8004).